The sequence spans 116 residues: Ferredoxin-like protein in nif region (116 aa).

The 28-residue stretch at 2-29 (AYTITSQCISCKLCSSVCPTGAIKIAEN) folds into the 4Fe-4S ferredoxin-type domain. Positions 9, 12, 15, and 19 each coordinate iron-sulfur cluster.

The polypeptide is Ferredoxin-like protein in nif region (fdxN) (Nostoc sp. (strain PCC 7120 / SAG 25.82 / UTEX 2576)).